Reading from the N-terminus, the 66-residue chain is Truncated interferon antagonist OPG039 (66 aa).

The stretch at 29–58 is one ANK repeat; the sequence is HGHSALYYAIADNNMRLVCTLLNAGALKNL.

The protein belongs to the orthopoxvirus OPG039 family.

The chain is Truncated interferon antagonist OPG039 (OPG040) from Homo sapiens (Human).